We begin with the raw amino-acid sequence, 138 residues long: Large ribosomal subunit protein uL16 (138 aa).

The segment covering 1–17 has biased composition (basic residues); that stretch reads MLIPRRVKHRKQHHPTR. Residues 1-24 are disordered; the sequence is MLIPRRVKHRKQHHPTRRGAASGG.

This sequence belongs to the universal ribosomal protein uL16 family. In terms of assembly, part of the 50S ribosomal subunit.

Binds 23S rRNA and is also seen to make contacts with the A and possibly P site tRNAs. The chain is Large ribosomal subunit protein uL16 from Kineococcus radiotolerans (strain ATCC BAA-149 / DSM 14245 / SRS30216).